A 339-amino-acid polypeptide reads, in one-letter code: Phenylalanine--tRNA ligase alpha subunit (339 aa).

Glutamate 254 serves as a coordination point for Mg(2+).

The protein belongs to the class-II aminoacyl-tRNA synthetase family. Phe-tRNA synthetase alpha subunit type 1 subfamily. As to quaternary structure, tetramer of two alpha and two beta subunits. The cofactor is Mg(2+).

It is found in the cytoplasm. It carries out the reaction tRNA(Phe) + L-phenylalanine + ATP = L-phenylalanyl-tRNA(Phe) + AMP + diphosphate + H(+). The polypeptide is Phenylalanine--tRNA ligase alpha subunit (Clostridium botulinum (strain Alaska E43 / Type E3)).